A 152-amino-acid chain; its full sequence is UPF0178 protein Shewmr7_1635 (152 aa).

This sequence belongs to the UPF0178 family.

The chain is UPF0178 protein Shewmr7_1635 from Shewanella sp. (strain MR-7).